The sequence spans 266 residues: Hydroxyethylthiazole kinase (266 aa).

Met-43 is a substrate binding site. 2 residues coordinate ATP: Arg-119 and Thr-166. Position 193 (Gly-193) interacts with substrate.

The protein belongs to the Thz kinase family. Requires Mg(2+) as cofactor.

The catalysed reaction is 5-(2-hydroxyethyl)-4-methylthiazole + ATP = 4-methyl-5-(2-phosphooxyethyl)-thiazole + ADP + H(+). The protein operates within cofactor biosynthesis; thiamine diphosphate biosynthesis; 4-methyl-5-(2-phosphoethyl)-thiazole from 5-(2-hydroxyethyl)-4-methylthiazole: step 1/1. In terms of biological role, catalyzes the phosphorylation of the hydroxyl group of 4-methyl-5-beta-hydroxyethylthiazole (THZ). In Methanococcus vannielii (strain ATCC 35089 / DSM 1224 / JCM 13029 / OCM 148 / SB), this protein is Hydroxyethylthiazole kinase.